The primary structure comprises 319 residues: Vomeronasal type-1 receptor 96 (319 aa).

Topologically, residues 1-19 (MNKVNILPSDTNIKITLFS) are extracellular. The helical transmembrane segment at 20–40 (EVSVGISANSVLFFAHLCMFF) threads the bilayer. The Cytoplasmic portion of the chain corresponds to 41–49 (EENRSKPID). A helical transmembrane segment spans residues 50 to 70 (LCIAFLSLTQLMLLVTMGLIA). At 71–93 (ADMFMSQGIWDSTTCRSIIYFHR) the chain is on the extracellular side. C85 and C172 form a disulfide bridge. Residues 94–114 (LLRGFNLCAACLLHILWTFTL) traverse the membrane as a helical segment. Residues 115–134 (SPRSSCLTKFKHKSPHHISC) are Cytoplasmic-facing. A helical transmembrane segment spans residues 135 to 155 (AFFSLCVLYMLFSSHLFVLII). Residues 156 to 193 (ATSNLTSDHFMYVTQSCSILPMSYSRTTMFSLVMVTRE) lie on the Extracellular side of the membrane. N-linked (GlcNAc...) asparagine glycosylation is present at N159. The chain crosses the membrane as a helical span at residues 194–214 (AFLISLMALFSGYMVTLLWRH). The Cytoplasmic portion of the chain corresponds to 215-238 (KKQVQHLHSTSLSSKSSPQQRATR). Residues 239–259 (TILLLMSFFVVLYILDIVIFQ) form a helical membrane-spanning segment. The Extracellular portion of the chain corresponds to 260 to 269 (SRTKFKDGSM). A helical membrane pass occupies residues 270–290 (FYSLHIIVSHSYATISPFVFI). The Cytoplasmic portion of the chain corresponds to 291 to 319 (FSDKRIIKFLGSMSGRIINICLFSDGYGP).

This sequence belongs to the G-protein coupled receptor 1 family.

The protein localises to the cell membrane. Functionally, putative pheromone receptor implicated in the regulation of social as well as reproductive behavior. In Rattus norvegicus (Rat), this protein is Vomeronasal type-1 receptor 96 (Vom1r96).